The chain runs to 296 residues: 4-diphosphocytidyl-2-C-methyl-D-erythritol kinase (296 aa).

K13 is a catalytic residue. 104-114 (PMGGGIGGGSS) provides a ligand contact to ATP. Residue D146 is part of the active site.

It belongs to the GHMP kinase family. IspE subfamily.

It carries out the reaction 4-CDP-2-C-methyl-D-erythritol + ATP = 4-CDP-2-C-methyl-D-erythritol 2-phosphate + ADP + H(+). Its pathway is isoprenoid biosynthesis; isopentenyl diphosphate biosynthesis via DXP pathway; isopentenyl diphosphate from 1-deoxy-D-xylulose 5-phosphate: step 3/6. Functionally, catalyzes the phosphorylation of the position 2 hydroxy group of 4-diphosphocytidyl-2C-methyl-D-erythritol. In Hahella chejuensis (strain KCTC 2396), this protein is 4-diphosphocytidyl-2-C-methyl-D-erythritol kinase.